A 252-amino-acid polypeptide reads, in one-letter code: Transcription factor bHLH117 (252 aa).

A disordered region spans residues 103-141 (LFPSLSPPLPAAKRQKLNSTSSSTTSGSPTASNDGGIIT). The segment covering 121 to 134 (STSSSTTSGSPTAS) has biased composition (low complexity). Residues 130-179 (SPTASNDGGIITKRRKISDKIRSLEKLMPWERKMNLAMTLEESHKYIKFL) enclose the bHLH domain.

Homodimer.

It is found in the nucleus. The protein is Transcription factor bHLH117 (BHLH117) of Arabidopsis thaliana (Mouse-ear cress).